The following is a 177-amino-acid chain: GTP-dependent dephospho-CoA kinase (177 aa).

GTP-binding residues include aspartate 45, valine 46, valine 47, aspartate 64, and glutamate 120.

It belongs to the GTP-dependent DPCK family.

The enzyme catalyses 3'-dephospho-CoA + GTP = GDP + CoA + H(+). It functions in the pathway cofactor biosynthesis; coenzyme A biosynthesis. Its function is as follows. Catalyzes the GTP-dependent phosphorylation of the 3'-hydroxyl group of dephosphocoenzyme A to form coenzyme A (CoA). The polypeptide is GTP-dependent dephospho-CoA kinase (Halobacterium salinarum (strain ATCC 29341 / DSM 671 / R1)).